Reading from the N-terminus, the 1980-residue chain is MAARLLAPPGPDSFKPFTPESLANIERRIAESKLKKPPKADGSHREDDEDSKPKPNSDLEAGKSLPFIYGDIPQGLVAVPLEDFDPYYLTQKTFVVLNRGKTLFRFSATPALYILSPFNLIRRIAIKILIHSVFSMIIMCTILTNCVFMTFSNPPDWSKNVEYTFTGIYTFESLVKIIARGFCIDGFTFLRDPWNWLDFSVIMMAYITEFVNLGNVSALRTFRVLRALKTISVIPGLKTIVGALIQSVKKLSDVMILTVFCLSVFALIGLQLFMGNLRNKCVVWPINFNESYLENGTKGFDWEEYINNKTNFYTVPGMLEPLLCGNSSDAGQCPEGYQCMKAGRNPNYGYTSFDTFSWAFLALFRLMTQDYWENLYQLTLRAAGKTYMIFFVLVIFVGSFYLVNLILAVVAMAYEEQNQATLEEAEQKEAEFKAMLEQLKKQQEEAQAAAMATSAGTVSEDAIEEEGEEGGGSPRSSSEISKLSSKSAKERRNRRKKRKQKELSEGEEKGDPEKVFKSESEDGMRRKAFRLPDNRIGRKFSIMNQSLLSIPGSPFLSRHNSKSSIFSFRGPGRFRDPGSENEFADDEHSTVEESEGRRDSLFIPIRARERRSSYSGYSGYSQGSRSSRIFPSLRRSVKRNSTVDCNGVVSLIGGPGSHIGGRLLPEATTEVEIKKKGPGSLLVSMDQLASYGRKDRINSIMSVVTNTLVEELEESQRKCPPCWYKFANTFLIWECHPYWIKLKEIVNLIVMDPFVDLAITICIVLNTLFMAMEHHPMTPQFEHVLAVGNLVFTGIFTAEMFLKLIAMDPYYYFQEGWNIFDGFIVSLSLMELSLADVEGLSVLRSFRLLRVFKLAKSWPTLNMLIKIIGNSVGALGNLTLVLAIIVFIFAVVGMQLFGKSYKECVCKINQDCELPRWHMHDFFHSFLIVFRVLCGEWIETMWDCMEVAGQAMCLIVFMMVMVIGNLVVLNLFLALLLSSFSADNLAATDDDGEMNNLQISVIRIKKGVAWTKLKVHAFMQAHFKQREADEVKPLDELYEKKANCIANHTGADIHRNGDFQKNGNGTTSGIGSSVEKYIIDEDHMSFINNPNLTVRVPIAVGESDFENLNTEDVSSESDPEGSKDKLDDTSSSEGSTIDIKPEVEEVPVEQPEEYLDPDACFTEGCVQRFKCCQVNIEEGLGKSWWILRKTCFLIVEHNWFETFIIFMILLSSGALAFEDIYIEQRKTIRTILEYADKVFTYIFILEMLLKWTAYGFVKFFTNAWCWLDFLIVAVSLVSLIANALGYSELGAIKSLRTLRALRPLRALSRFEGMRVVVNALVGAIPSIMNVLLVCLIFWLIFSIMGVNLFAGKYHYCFNETSEIRFEIEDVNNKTECEKLMEGNNTEIRWKNVKINFDNVGAGYLALLQVATFKGWMDIMYAAVDSRKPDEQPKYEDNIYMYIYFVIFIIFGSFFTLNLFIGVIIDNFNQQKKKFGGQDIFMTEEQKKYYNAMKKLGSKKPQKPIPRPLNKIQGIVFDFVTQQAFDIVIMMLICLNMVTMMVETDTQSKQMENILYWINLVFVIFFTCECVLKMFALRHYYFTIGWNIFDFVVVILSIVGMFLADIIEKYFVSPTLFRVIRLARIGRILRLIKGAKGIRTLLFALMMSLPALFNIGLLLFLVMFIFSIFGMSNFAYVKHEAGIDDMFNFETFGNSMICLFQITTSAGWDGLLLPILNRPPDCSLDKEHPGSGFKGDCGNPSVGIFFFVSYIIISFLIVVNMYIAIILENFSVATEESADPLSEDDFETFYEIWEKFDPDATQFIEYCKLADFADALEHPLRVPKPNTIELIAMDLPMVSGDRIHCLDILFAFTKRVLGDSGELDILRQQMEERFVASNPSKVSYEPITTTLRRKQEEVSAVVLQRAYRGHLARRGFICKKTTSNKLENGGTHREKKESTPSTASLPSYDSVTKPEKEKQQRAEEGRRERAKRQKEVRESKC.

Disordered stretches follow at residues Met-1 to Glu-20 and Arg-28 to Gly-62. The Cytoplasmic portion of the chain corresponds to Met-1–Ser-132. Residues Arg-28–Ala-61 show a composition bias toward basic and acidic residues. One copy of the I repeat lies at Ile-114–Gln-442. A helical transmembrane segment spans residues Val-133–Phe-151. At Ser-152–Ser-158 the chain is on the extracellular side. Residues Lys-159–Ala-179 traverse the membrane as a helical segment. Over Arg-180–Pro-193 the chain is Cytoplasmic. Residues Trp-194–Val-211 form a helical membrane-spanning segment. At Asn-212 to Ser-217 the chain is on the extracellular side. Asn-215 is a glycosylation site (N-linked (GlcNAc...) asparagine). A helical membrane pass occupies residues Ala-218–Ile-234. Over Pro-235–Asp-253 the chain is Cytoplasmic. The chain crosses the membrane as a helical span at residues Val-254–Phe-273. The Extracellular portion of the chain corresponds to Met-274–Thr-355. Cys-281 and Cys-333 are oxidised to a cystine. Residues Asn-289, Asn-295, and Asn-308 are each glycosylated (N-linked (GlcNAc...) asparagine). N-linked (GlcNAc...) (high mannose) asparagine glycosylation is present at Asn-326. Positions Phe-356–Leu-380 form an intramembrane region, pore-forming. Glu-373 serves as a coordination point for Na(+). The Extracellular portion of the chain corresponds to Arg-381–Tyr-387. The chain crosses the membrane as a helical span at residues Met-388–Ala-408. The Cytoplasmic portion of the chain corresponds to Val-409–Pro-753. Disordered regions lie at residues Ala-446 to Arg-530 and Phe-568 to Phe-602. Residues Pro-474–Lys-486 are compositionally biased toward low complexity. Positions Lys-489 to Gln-500 are enriched in basic residues. Composition is skewed to basic and acidic residues over residues Lys-501–Arg-530 and Asp-586–Phe-602. 2 positions are modified to phosphoserine: Ser-518 and Ser-520. Residues Cys-735–Gly-1007 form an II repeat. The helical transmembrane segment at Phe-754 to Met-772 threads the bilayer. At Glu-773 to His-783 the chain is on the extracellular side. Residues Val-784–Lys-803 traverse the membrane as a helical segment. Residues Leu-804–Trp-817 are Cytoplasmic-facing. Residues Asn-818–Val-837 form a helical membrane-spanning segment. Residues Glu-838 to Gly-839 are Extracellular-facing. The helical transmembrane segment at Leu-840–Ser-857 threads the bilayer. The Cytoplasmic portion of the chain corresponds to Trp-858–Gly-873. A helical transmembrane segment spans residues Ala-874–Val-892. Residues Gly-893 to Asp-921 lie on the Extracellular side of the membrane. A disulfide bond links Cys-906 and Cys-912. Residues Phe-922–Trp-942 constitute an intramembrane region (pore-forming). Glu-936 and Glu-939 together coordinate Na(+). Residues Asp-943–Ile-955 are Extracellular-facing. An intrachain disulfide couples Cys-944 to Cys-953. Residues Val-956–Leu-976 traverse the membrane as a helical segment. The Cytoplasmic segment spans residues Leu-977–Trp-1199. The interval Asn-1107 to Val-1148 is disordered. The stretch at Leu-1180–Leu-1495 is one III repeat. The chain crosses the membrane as a helical span at residues Phe-1200–Phe-1217. Topologically, residues Glu-1218–Thr-1230 are extracellular. The chain crosses the membrane as a helical span at residues Ile-1231–Leu-1249. The Cytoplasmic portion of the chain corresponds to Lys-1250–Ala-1263. Residues Trp-1264–Asn-1282 traverse the membrane as a helical segment. The Extracellular portion of the chain corresponds to Ala-1283–Gly-1290. Residues Ala-1291–Arg-1309 form a helical membrane-spanning segment. The Cytoplasmic segment spans residues Phe-1310–Ser-1326. The chain crosses the membrane as a helical span at residues Ile-1327–Val-1346. At Asn-1347 to Val-1399 the chain is on the extracellular side. Cys-1356 and Cys-1376 form a disulfide bridge. Asn-1358, Asn-1372, and Asn-1383 each carry an N-linked (GlcNAc...) asparagine glycan. The segment at residues Gly-1400–Ala-1421 is an intramembrane region (pore-forming). Residues Ala-1422–Ile-1438 are Extracellular-facing. Residues Tyr-1439–Ile-1460 traverse the membrane as a helical segment. The Cytoplasmic segment spans residues Gly-1461–Ala-1523. Ser-1497 is modified (phosphoserine; by PKC). The stretch at Ile-1504–Gln-1801 is one IV repeat. The chain crosses the membrane as a helical span at residues Phe-1524–Val-1541. Residues Glu-1542–Asn-1552 lie on the Extracellular side of the membrane. The chain crosses the membrane as a helical span at residues Ile-1553 to Leu-1571. Over Lys-1572–Ile-1583 the chain is Cytoplasmic. Residues Gly-1584–Phe-1601 form a helical membrane-spanning segment. Residues Leu-1602–Thr-1614 are Extracellular-facing. A helical membrane pass occupies residues Leu-1615 to Ile-1631. The Cytoplasmic portion of the chain corresponds to Lys-1632–Ala-1650. Residues Leu-1651–Phe-1668 form a helical membrane-spanning segment. Over Gly-1669–Thr-1690 the chain is Extracellular. The segment at residues Phe-1691 to Pro-1713 is an intramembrane region (pore-forming). Residues Ile-1714–Gly-1742 are Extracellular-facing. A disulfide bridge connects residues Cys-1721 and Cys-1736. The chain crosses the membrane as a helical span at residues Ile-1743–Ile-1765. The Cytoplasmic portion of the chain corresponds to Leu-1766–Cys-1980. Residues Glu-1895–Lys-1924 form the IQ domain. Residues Ser-1922–Cys-1980 form a disordered region. Positions Thr-1938 to Ser-1949 are enriched in polar residues. Residues Thr-1951–Cys-1980 are compositionally biased toward basic and acidic residues.

This sequence belongs to the sodium channel (TC 1.A.1.10) family. Nav1.6/SCN8A subfamily. As to quaternary structure, the voltage-sensitive sodium channel consists of an ion-conducting pore-forming alpha subunit regulated by one or more beta-1 (SCN1B), beta-2 (SCN2B), beta-3 (SCN3B) and/or beta-4 (SCN4B) subunits. Beta-1 (SCN1B) and beta-3 (SCN3B) are non-covalently associated with alpha, while beta-2 (SCN2B) and beta-4 (SCN4B) are covalently linked by disulfide bonds. Interacts with NEDD4 and NEDD4L. Interacts with FGF13. Interacts with FGF14, GBG3, GBB2 and SCN1B. Interacts with TMEM233. Interacts with the conotoxin GVIIJ. Interacts with the spider beta/delta-theraphotoxin-Pre1a. Interacts with CALM1; the interaction modulates the inactivation rate of SCN8A. In terms of processing, may be ubiquitinated by NEDD4L; which would promote its endocytosis. Post-translationally, phosphorylation at Ser-1497 by PKC in a highly conserved cytoplasmic loop slows inactivation of the sodium channel and reduces peak sodium currents. Expressed in the hippocampus with increased expression in epileptic tissue compared to normal adjacent tissue (at protein level). In terms of tissue distribution, expressed in non-neuronal tissues, such as monocytes/macrophages.

Its subcellular location is the cell membrane. The protein localises to the cell projection. It is found in the axon. It localises to the cytoplasmic vesicle. The protein resides in the podosome. The catalysed reaction is Na(+)(in) = Na(+)(out). Its activity is regulated as follows. Inhibited by tetrodotoxin and, more weakly, by its metabolite 4,9-ah-tetrodotoxin. In terms of biological role, pore-forming subunit of a voltage-gated sodium channel complex assuming opened or closed conformations in response to the voltage difference across membranes and through which sodium ions selectively pass along their electrochemical gradient. Contributes to neuronal excitability by regulating action potential threshold and propagation. More specifically expressed in non-neuronal cells, could play a role in sodium release from intracellular compartments and participate in the control of podosomes formation and macrophages adhesion and movement. This Homo sapiens (Human) protein is Sodium channel protein type 8 subunit alpha.